Reading from the N-terminus, the 262-residue chain is 3-methyl-2-oxobutanoate hydroxymethyltransferase (262 aa).

Mg(2+) is bound by residues D43 and D82. Residues 43–44, D82, and K110 each bind 3-methyl-2-oxobutanoate; that span reads DS. E112 contributes to the Mg(2+) binding site. Catalysis depends on E179, which acts as the Proton acceptor.

It belongs to the PanB family. In terms of assembly, homodecamer; pentamer of dimers. Requires Mg(2+) as cofactor.

It is found in the cytoplasm. It catalyses the reaction 3-methyl-2-oxobutanoate + (6R)-5,10-methylene-5,6,7,8-tetrahydrofolate + H2O = 2-dehydropantoate + (6S)-5,6,7,8-tetrahydrofolate. It functions in the pathway cofactor biosynthesis; (R)-pantothenate biosynthesis; (R)-pantoate from 3-methyl-2-oxobutanoate: step 1/2. In terms of biological role, catalyzes the reversible reaction in which hydroxymethyl group from 5,10-methylenetetrahydrofolate is transferred onto alpha-ketoisovalerate to form ketopantoate. In Sodalis glossinidius (strain morsitans), this protein is 3-methyl-2-oxobutanoate hydroxymethyltransferase.